A 46-amino-acid polypeptide reads, in one-letter code: MAERSLSGLTEEEAVAVHAQFQTTFSAFIVLAAVAHVLVWVWKPWF.

Residues 2-25 (AERSLSGLTEEEAVAVHAQFQTTF) lie on the Cytoplasmic side of the membrane. 2 residues coordinate a bacteriochlorophyll: His-18 and His-36. The helical transmembrane segment at 26–46 (SAFIVLAAVAHVLVWVWKPWF) threads the bilayer.

This sequence belongs to the antenna complex beta subunit family. As to quaternary structure, the core complex is formed by different alpha and beta chains, binding bacteriochlorophyll molecules, and arranged most probably in tetrameric structures disposed around the reaction center.

The protein localises to the cell inner membrane. Functionally, antenna complexes are light-harvesting systems, which transfer the excitation energy to the reaction centers. The chain is Light-harvesting protein B-800/850 beta 2 chain (B2) from Magnetospirillum molischianum (Rhodospirillum molischianum).